The primary structure comprises 291 residues: Ribosomal RNA small subunit methyltransferase A (291 aa).

The S-adenosyl-L-methionine site is built by Asn29, Leu31, Gly56, Glu77, Asp102, and Asn127.

Belongs to the class I-like SAM-binding methyltransferase superfamily. rRNA adenine N(6)-methyltransferase family. RsmA subfamily.

The protein resides in the cytoplasm. The enzyme catalyses adenosine(1518)/adenosine(1519) in 16S rRNA + 4 S-adenosyl-L-methionine = N(6)-dimethyladenosine(1518)/N(6)-dimethyladenosine(1519) in 16S rRNA + 4 S-adenosyl-L-homocysteine + 4 H(+). Its function is as follows. Specifically dimethylates two adjacent adenosines (A1518 and A1519) in the loop of a conserved hairpin near the 3'-end of 16S rRNA in the 30S particle. May play a critical role in biogenesis of 30S subunits. The protein is Ribosomal RNA small subunit methyltransferase A of Geobacillus sp. (strain WCH70).